Reading from the N-terminus, the 257-residue chain is Pyridoxine 5'-phosphate synthase (257 aa).

Position 12 (asparagine 12) interacts with 3-amino-2-oxopropyl phosphate. Residue 14–15 (DH) participates in 1-deoxy-D-xylulose 5-phosphate binding. Position 23 (arginine 23) interacts with 3-amino-2-oxopropyl phosphate. The active-site Proton acceptor is histidine 48. 1-deoxy-D-xylulose 5-phosphate is bound by residues arginine 50 and histidine 55. Residue glutamate 75 is the Proton acceptor of the active site. Threonine 105 is a binding site for 1-deoxy-D-xylulose 5-phosphate. The active-site Proton donor is the histidine 199. Residues glycine 200 and 221–222 (GH) contribute to the 3-amino-2-oxopropyl phosphate site.

The protein belongs to the PNP synthase family. As to quaternary structure, homooctamer; tetramer of dimers.

It is found in the cytoplasm. The enzyme catalyses 3-amino-2-oxopropyl phosphate + 1-deoxy-D-xylulose 5-phosphate = pyridoxine 5'-phosphate + phosphate + 2 H2O + H(+). It functions in the pathway cofactor biosynthesis; pyridoxine 5'-phosphate biosynthesis; pyridoxine 5'-phosphate from D-erythrose 4-phosphate: step 5/5. In terms of biological role, catalyzes the complicated ring closure reaction between the two acyclic compounds 1-deoxy-D-xylulose-5-phosphate (DXP) and 3-amino-2-oxopropyl phosphate (1-amino-acetone-3-phosphate or AAP) to form pyridoxine 5'-phosphate (PNP) and inorganic phosphate. This is Pyridoxine 5'-phosphate synthase from Xanthobacter autotrophicus (strain ATCC BAA-1158 / Py2).